Reading from the N-terminus, the 488-residue chain is 3-octaprenyl-4-hydroxybenzoate carboxy-lyase (488 aa).

Asn172 contributes to the Mn(2+) binding site. Prenylated FMN is bound by residues 175 to 177, 189 to 191, and 194 to 195; these read IYR, RWL, and RG. Position 238 (Glu238) interacts with Mn(2+). Asp287 serves as the catalytic Proton donor.

This sequence belongs to the UbiD family. As to quaternary structure, homohexamer. Prenylated FMN is required as a cofactor. The cofactor is Mn(2+).

The protein resides in the cell membrane. The enzyme catalyses a 4-hydroxy-3-(all-trans-polyprenyl)benzoate + H(+) = a 2-(all-trans-polyprenyl)phenol + CO2. It functions in the pathway cofactor biosynthesis; ubiquinone biosynthesis. Catalyzes the decarboxylation of 3-octaprenyl-4-hydroxy benzoate to 2-octaprenylphenol, an intermediate step in ubiquinone biosynthesis. This is 3-octaprenyl-4-hydroxybenzoate carboxy-lyase from Pseudomonas syringae pv. syringae (strain B728a).